Here is a 179-residue protein sequence, read N- to C-terminus: MQQNIIKVIVGSKNPVKINAAANAMALLFPDYEIQTQGMDAPSGVPAQPMTDSDTRQGAINRVHYCQQQIEADYYFAMEGGVDCFEFGPATFAYIAIAHQARLSIGRGALLPLPMQVYQALEAGEELGHVMDRLFNTVNIKQKGGAIGLLTHGHATRESNYTQAIILAMAPFLNPELYP.

Position 71 (glutamate 71) interacts with Mg(2+). 71-72 (EA) lines the substrate pocket.

This sequence belongs to the YjjX NTPase family. Homodimer. Mg(2+) is required as a cofactor. Requires Mn(2+) as cofactor.

It carries out the reaction XTP + H2O = XDP + phosphate + H(+). The catalysed reaction is ITP + H2O = IDP + phosphate + H(+). Its function is as follows. Phosphatase that hydrolyzes non-canonical purine nucleotides such as XTP and ITP to their respective diphosphate derivatives. Probably excludes non-canonical purines from DNA/RNA precursor pool, thus preventing their incorporation into DNA/RNA and avoiding chromosomal lesions. In Shewanella sp. (strain ANA-3), this protein is Inosine/xanthosine triphosphatase.